The following is a 529-amino-acid chain: Delayed-rectifier potassium channel regulatory subunit KCNS1 (529 aa).

At 1–217 (MLMLLVRGTH…LTMENPGYSL (217 aa)) the chain is on the cytoplasmic side. Residues 218 to 239 (PSKLFSCVSISVVLASIAAMCI) traverse the membrane as a helical segment. Residues 240–270 (HSLPEYQAREAAAAVAAVAAGRSPEGVRDDP) are Extracellular-facing. Residues 271-293 (VLRRLEYFCIAWFSFEVSSRLLL) form a helical membrane-spanning segment. At 294–304 (APSTRNFFCHP) the chain is on the cytoplasmic side. A helical transmembrane segment spans residues 305–322 (LNLIDIVSVLPFYLTLLA). Over 323 to 340 (GVALGDQGGTGGKELGHL) the chain is Extracellular. A helical; Voltage-sensor transmembrane segment spans residues 341-361 (GKVVQVFRLMRIFRVLKLARH). The Cytoplasmic portion of the chain corresponds to 362–376 (STGLRSLGATLKHSY). The chain crosses the membrane as a helical span at residues 377 to 398 (REVGILLLYLAVGVSVFSGVAY). The Extracellular segment spans residues 399–411 (TAEKEEDVGFNTI). Residues 412-423 (PACWWWGTVSMT) constitute an intramembrane region (helical). Residues 424 to 429 (TVGYGD) carry the Selectivity filter motif. An intramembrane segment occupies 424–431 (TVGYGDVV). Topologically, residues 432-438 (PVTVAGK) are extracellular. The helical transmembrane segment at 439–467 (LAASGCILGGILVVALPITIIFNKFSHFY) threads the bilayer. At 468–529 (RRQKALEAAV…PSEPPHPQMY (62 aa)) the chain is on the cytoplasmic side. Residues 496-529 (SEASLETSRETSQEGRSADLETQAPSEPPHPQMY) form a disordered region. Residues 502 to 514 (TSRETSQEGRSAD) are compositionally biased toward basic and acidic residues.

The protein belongs to the potassium channel family. S (TC 1.A.1.2) subfamily. Kv9.1/KCNS1 sub-subfamily. Heterotetramer with KCNB1. Heterotetramer with KCNB2. Does not form homomultimers.

It localises to the cell membrane. Functionally, potassium channel regulatory subunit that modulate the delayed rectifier voltage-gated potassium channel activity of KCNB1 and KCNB2 by altering their kinetics, expression levels, and shifting the half-inactivation potential to more polarized values. While it does not form functional channels on its own, it can form functional heterotetrameric channels with KCNB1 and KCNB2. Each regulatory subunit has unique regulatory properties that can lead to extensive inhibition, significant changes in kinetics, and/or substantial shifts in the voltage dependencies of the inactivation process. In Papio anubis (Olive baboon), this protein is Delayed-rectifier potassium channel regulatory subunit KCNS1.